We begin with the raw amino-acid sequence, 63 residues long: Juvenile hormone esterase, isoform B (63 aa).

N-linked (GlcNAc...) asparagine glycosylation is present at asparagine 20.

The protein belongs to the type-B carboxylesterase/lipase family. In terms of tissue distribution, fat body, the site of their biosynthesis, and the hemolymph where it is secreted.

It catalyses the reaction juvenile hormone I + H2O = juvenile hormone I carboxylate + methanol + H(+). The enzyme catalyses juvenile hormone III + H2O = juvenile hormone III carboxylate + methanol + H(+). Functionally, JH esterase plays a crucial role in the decrease of JH activity in lepidopteran insects, by hydrolyzing the methyl ester of JH. It is also involved in the transport of JH. The sequence is that of Juvenile hormone esterase, isoform B from Trichoplusia ni (Cabbage looper).